Reading from the N-terminus, the 911-residue chain is Protein translocase subunit SecA (911 aa).

Residues Gln87, 105–109, and Asp499 each bind ATP; that span reads GEGKT. Residues Cys895, Cys897, Cys906, and His907 each contribute to the Zn(2+) site.

It belongs to the SecA family. As to quaternary structure, monomer and homodimer. Part of the essential Sec protein translocation apparatus which comprises SecA, SecYEG and auxiliary proteins SecDF-YajC and YidC. Zn(2+) is required as a cofactor.

The protein localises to the cell inner membrane. Its subcellular location is the cytoplasm. The catalysed reaction is ATP + H2O + cellular proteinSide 1 = ADP + phosphate + cellular proteinSide 2.. Part of the Sec protein translocase complex. Interacts with the SecYEG preprotein conducting channel. Has a central role in coupling the hydrolysis of ATP to the transfer of proteins into and across the cell membrane, serving both as a receptor for the preprotein-SecB complex and as an ATP-driven molecular motor driving the stepwise translocation of polypeptide chains across the membrane. The chain is Protein translocase subunit SecA from Novosphingobium aromaticivorans (strain ATCC 700278 / DSM 12444 / CCUG 56034 / CIP 105152 / NBRC 16084 / F199).